The primary structure comprises 273 residues: Nickel import ATP-binding protein NikE (273 aa).

Positions 13–252 (YRTGGLLRKR…AHPVGRQLQA (240 aa)) constitute an ABC transporter domain. 45 to 52 (GSSGSGKS) lines the ATP pocket.

This sequence belongs to the ABC transporter superfamily. Nickel importer (TC 3.A.1.5.3) family. In terms of assembly, the complex is composed of two ATP-binding proteins (NikD and NikE), two transmembrane proteins (NikB and NikC) and a solute-binding protein (NikA).

The protein localises to the cell inner membrane. It catalyses the reaction Ni(2+)(out) + ATP + H2O = Ni(2+)(in) + ADP + phosphate + H(+). Its function is as follows. Part of the ABC transporter complex NikABCDE involved in nickel import. Responsible for energy coupling to the transport system. This Pseudomonas putida (strain ATCC 47054 / DSM 6125 / CFBP 8728 / NCIMB 11950 / KT2440) protein is Nickel import ATP-binding protein NikE.